The chain runs to 1059 residues: Zinc finger protein 628 (1059 aa).

6 consecutive C2H2-type zinc fingers follow at residues 36–58 (YECG…QRTH), 64–86 (YKCP…QRGH), 92–114 (YQCP…RSVH), 120–142 (FICG…LRQH), 148–170 (YPCP…RHVH), and 176–198 (YTCG…QRVH). T199 carries the phosphothreonine modification. Residues 204–226 (FRCPLCPKTFTHSSNLLLHQRTH) form a C2H2-type 7 zinc finger. 3 disordered regions span residues 226–247 (HGAA…REPG), 260–280 (LQPH…PVVP), and 312–351 (EHQP…PAAA). A compositionally biased stretch (low complexity) spans 228-237 (AAPAPGTASA). A compositionally biased stretch (pro residues) spans 263–279 (HSPPAPPAPPPPPPPVV). Residues 323–335 (PQPQEAPAEAPKA) are compositionally biased toward low complexity. The segment covering 336–351 (DQPPSPLPQPPPPAAA) has biased composition (pro residues). C2H2-type zinc fingers lie at residues 356-378 (FACL…QHSH), 386-408 (FRCG…QQCH), 454-476 (YKCA…LRDH), 482-504 (YQCG…QRVH), 510-532 (FTCG…LRLH), 538-560 (YACG…RHVH), and 566-588 (HACG…QRVH). Residue T589 is modified to Phosphothreonine. 2 consecutive C2H2-type zinc fingers follow at residues 594 to 616 (FRCP…QRTH) and 622 to 644 (FTCP…LRTH). Residues 644-658 (HAPANTPPSTTAPAA) show a composition bias toward low complexity. Residues 644-674 (HAPANTPPSTTAPAAGPQPPAPLAAARAPPA) form a disordered region. 4 repeat units span residues 818-831 (VQLQ…EVTT), 832-842 (VQLQPAQEVTT), 843-853 (VQLQPAQEVTT), and 854-864 (VQLQPAQEVTT). The segment at 818–864 (VQLQPLRPAPEVTTVQLQPAQEVTTVQLQPAQEVTTVQLQPAQEVTT) is 4 X approximate tandem repeats. The interval 943-1059 (DGEQTRLCVQ…LPAVQLVHTF (117 aa)) is interaction with TAF4B.

As to quaternary structure, interacts with TAF4B.

The protein resides in the nucleus. In terms of biological role, transcriptional activator. Binds DNA on GT-box consensus sequence 5'-TTGGTT-3'. Plays a role in spermiogenesis. In Homo sapiens (Human), this protein is Zinc finger protein 628 (ZNF628).